The following is a 575-amino-acid chain: Flagellin A (575 aa).

Tandem repeats lie at residues 405 to 409, 411 to 415, and 447 to 450.

This sequence belongs to the bacterial flagellin family. As to quaternary structure, heteromer of flaA and flaB.

It localises to the secreted. Its subcellular location is the bacterial flagellum. Flagellin is the subunit protein which polymerizes to form the filaments of bacterial flagella. This chain is Flagellin A (flaA), found in Campylobacter jejuni.